A 489-amino-acid chain; its full sequence is Cobyric acid synthase (489 aa).

One can recognise a GATase cobBQ-type domain in the interval 251–439 (RLTVVAPVYP…LHGLFDTPAA (189 aa)). Cysteine 332 (nucleophile) is an active-site residue. Histidine 431 is an active-site residue.

This sequence belongs to the CobB/CobQ family. CobQ subfamily.

It participates in cofactor biosynthesis; adenosylcobalamin biosynthesis. Its function is as follows. Catalyzes amidations at positions B, D, E, and G on adenosylcobyrinic A,C-diamide. NH(2) groups are provided by glutamine, and one molecule of ATP is hydrogenolyzed for each amidation. In Aromatoleum aromaticum (strain DSM 19018 / LMG 30748 / EbN1) (Azoarcus sp. (strain EbN1)), this protein is Cobyric acid synthase.